A 306-amino-acid chain; its full sequence is Non-specific ribonucleoside hydrolase RihC (306 aa).

The active site involves His-235.

Belongs to the IUNH family. RihC subfamily.

Hydrolyzes both purine and pyrimidine ribonucleosides with a broad-substrate specificity. This is Non-specific ribonucleoside hydrolase RihC from Salmonella heidelberg (strain SL476).